The chain runs to 61 residues: U-stichotoxin-Hcr1b (61 aa).

A signal peptide spans 1 to 19; that stretch reads PILIFAFVMFAVMVNAKPS. The propeptide occupies 20 to 31; that stretch reads IDDAEMKREPKP. Intrachain disulfides connect cysteine 38–cysteine 49 and cysteine 41–cysteine 56.

This sequence belongs to the Hau1a/HC18/HC19 family.

The protein localises to the secreted. It is found in the nematocyst. Its function is as follows. Toxin that is lethal to crab. Does not produce the typical symptoms associated with sodium channel toxins in crabs, suggesting that it likely does not act on sodium channels. This Radianthus crispa (Leathery sea anemone) protein is U-stichotoxin-Hcr1b.